The primary structure comprises 107 residues: Death-associated protein-like 1 (107 aa).

The interval 1–23 (MANEVQDLLSPRKGGHPPAVKAG) is disordered.

In terms of tissue distribution, expressed in hair follicle (at protein level).

In terms of biological role, may play a role in the early stages of epithelial differentiation or in apoptosis. The sequence is that of Death-associated protein-like 1 (DAPL1) from Homo sapiens (Human).